The chain runs to 375 residues: Alcohol dehydrogenase class-3 chain H (375 aa).

N-acetylalanine is present on A1. Zn(2+) is bound by residues C46, H68, C98, C101, C104, C112, and C175.

This sequence belongs to the zinc-containing alcohol dehydrogenase family. Class-III subfamily. As to quaternary structure, homodimer or heterodimer with L chain. Requires Zn(2+) as cofactor.

The protein localises to the cytoplasm. It catalyses the reaction a primary alcohol + NAD(+) = an aldehyde + NADH + H(+). It carries out the reaction a secondary alcohol + NAD(+) = a ketone + NADH + H(+). The enzyme catalyses S-(hydroxymethyl)glutathione + NADP(+) = S-formylglutathione + NADPH + H(+). The catalysed reaction is S-(hydroxymethyl)glutathione + NAD(+) = S-formylglutathione + NADH + H(+). In terms of biological role, class-III ADH is remarkably ineffective in oxidizing ethanol, but it readily catalyzes the oxidation of long-chain primary alcohols and the oxidation of S-(hydroxymethyl) glutathione. The chain is Alcohol dehydrogenase class-3 chain H from Gadus morhua (Atlantic cod).